A 179-amino-acid polypeptide reads, in one-letter code: Viral interleukin-10 homolog (179 aa).

A signal peptide spans 1 to 18; it reads MFRASLLCCLVLLAGVWA. 2 disulfide bridges follow: Cys-30–Cys-127 and Cys-80–Cys-133. Residues Asn-100 and Asn-135 are each glycosylated (N-linked (GlcNAc...) asparagine; by host).

This sequence belongs to the IL-10 family.

Its subcellular location is the secreted. Its function is as follows. Down-regulates the expression of the TAP1 gene (transporter associated with antigen processing), thereby affecting the transport of peptides into the endoplasmic reticulum and subsequent peptide loading by MHC class I molecules. In consequence, infected cells are masked for immune recognition by cytotoxic T-lymphocytes. In Equus caballus (Horse), this protein is Viral interleukin-10 homolog.